Reading from the N-terminus, the 251-residue chain is Imidazole glycerol phosphate synthase subunit HisF (251 aa).

Residues Asp11 and Asp130 contribute to the active site.

The protein belongs to the HisA/HisF family. As to quaternary structure, heterodimer of HisH and HisF.

The protein localises to the cytoplasm. The enzyme catalyses 5-[(5-phospho-1-deoxy-D-ribulos-1-ylimino)methylamino]-1-(5-phospho-beta-D-ribosyl)imidazole-4-carboxamide + L-glutamine = D-erythro-1-(imidazol-4-yl)glycerol 3-phosphate + 5-amino-1-(5-phospho-beta-D-ribosyl)imidazole-4-carboxamide + L-glutamate + H(+). Its pathway is amino-acid biosynthesis; L-histidine biosynthesis; L-histidine from 5-phospho-alpha-D-ribose 1-diphosphate: step 5/9. IGPS catalyzes the conversion of PRFAR and glutamine to IGP, AICAR and glutamate. The HisF subunit catalyzes the cyclization activity that produces IGP and AICAR from PRFAR using the ammonia provided by the HisH subunit. The sequence is that of Imidazole glycerol phosphate synthase subunit HisF from Bacteroides thetaiotaomicron (strain ATCC 29148 / DSM 2079 / JCM 5827 / CCUG 10774 / NCTC 10582 / VPI-5482 / E50).